Reading from the N-terminus, the 595-residue chain is Transketolase-like protein 1 (595 aa).

93 to 95 (GWP) lines the thiamine diphosphate pocket. Mg(2+) is bound by residues Asp125, Asn155, and Ile157. Asn155 provides a ligand contact to thiamine diphosphate. Positions 217, 339, and 365 each coordinate thiamine diphosphate. The Proton donor role is filled by Glu339. Residues His389 and Asp397 each coordinate substrate. His401 is a binding site for thiamine diphosphate.

The protein belongs to the transketolase family. Homodimer. The cofactor is Mg(2+). Requires Ca(2+) as cofactor. Mn(2+) is required as a cofactor. Co(2+) serves as cofactor. It depends on thiamine diphosphate as a cofactor. In terms of tissue distribution, not expressed in the embryonic neocortex.

It is found in the cytoplasm. The catalysed reaction is D-sedoheptulose 7-phosphate + D-glyceraldehyde 3-phosphate = aldehydo-D-ribose 5-phosphate + D-xylulose 5-phosphate. Catalyzes the transfer of a two-carbon ketol group from a ketose donor to an aldose acceptor, via a covalent intermediate with the cofactor thiamine pyrophosphate. The polypeptide is Transketolase-like protein 1 (Mus musculus (Mouse)).